A 61-amino-acid chain; its full sequence is Small ribosomal subunit protein uS14 (61 aa).

4 residues coordinate Zn(2+): Cys-24, Cys-27, Cys-40, and Cys-43.

The protein belongs to the universal ribosomal protein uS14 family. Zinc-binding uS14 subfamily. In terms of assembly, part of the 30S ribosomal subunit. Contacts proteins S3 and S10. It depends on Zn(2+) as a cofactor.

Binds 16S rRNA, required for the assembly of 30S particles and may also be responsible for determining the conformation of the 16S rRNA at the A site. The polypeptide is Small ribosomal subunit protein uS14 (Syntrophobacter fumaroxidans (strain DSM 10017 / MPOB)).